The chain runs to 152 residues: Xanthine-guanine phosphoribosyltransferase (152 aa).

Residues 37–38 (RG) and 88–96 (DDLVDTGNT) contribute to the 5-phospho-alpha-D-ribose 1-diphosphate site. Position 89 (aspartate 89) interacts with Mg(2+). 2 residues coordinate guanine: aspartate 92 and isoleucine 135. Residues aspartate 92 and isoleucine 135 each contribute to the xanthine site. Residues 92-96 (DTGNT) and 134-135 (WI) contribute to the GMP site.

Belongs to the purine/pyrimidine phosphoribosyltransferase family. XGPT subfamily. Homotetramer. Mg(2+) is required as a cofactor.

It localises to the cell inner membrane. It catalyses the reaction GMP + diphosphate = guanine + 5-phospho-alpha-D-ribose 1-diphosphate. The enzyme catalyses XMP + diphosphate = xanthine + 5-phospho-alpha-D-ribose 1-diphosphate. It carries out the reaction IMP + diphosphate = hypoxanthine + 5-phospho-alpha-D-ribose 1-diphosphate. It participates in purine metabolism; GMP biosynthesis via salvage pathway; GMP from guanine: step 1/1. It functions in the pathway purine metabolism; XMP biosynthesis via salvage pathway; XMP from xanthine: step 1/1. Purine salvage pathway enzyme that catalyzes the transfer of the ribosyl-5-phosphate group from 5-phospho-alpha-D-ribose 1-diphosphate (PRPP) to the N9 position of the 6-oxopurines guanine and xanthine to form the corresponding ribonucleotides GMP (guanosine 5'-monophosphate) and XMP (xanthosine 5'-monophosphate), with the release of PPi. To a lesser extent, also acts on hypoxanthine. The sequence is that of Xanthine-guanine phosphoribosyltransferase from Actinobacillus succinogenes (strain ATCC 55618 / DSM 22257 / CCUG 43843 / 130Z).